The following is a 260-amino-acid chain: Global transcriptional regulator CodY (260 aa).

The interval 1 to 159 (MPNLLEKTRK…SSTVVGIQLL (159 aa)) is GAF domain. A DNA-binding region (H-T-H motif) is located at residues 207–226 (ASVIADRIGITRSVIVNALR).

This sequence belongs to the CodY family.

It is found in the cytoplasm. In terms of biological role, DNA-binding global transcriptional regulator which is involved in the adaptive response to starvation and acts by directly or indirectly controlling the expression of numerous genes in response to nutrient availability. During rapid exponential growth, CodY is highly active and represses genes whose products allow adaptation to nutrient depletion. This is Global transcriptional regulator CodY from Streptococcus pyogenes serotype M4 (strain MGAS10750).